Reading from the N-terminus, the 211-residue chain is Probable nicotinate-nucleotide adenylyltransferase (211 aa).

The protein belongs to the NadD family.

It carries out the reaction nicotinate beta-D-ribonucleotide + ATP + H(+) = deamido-NAD(+) + diphosphate. The protein operates within cofactor biosynthesis; NAD(+) biosynthesis; deamido-NAD(+) from nicotinate D-ribonucleotide: step 1/1. Catalyzes the reversible adenylation of nicotinate mononucleotide (NaMN) to nicotinic acid adenine dinucleotide (NaAD). The chain is Probable nicotinate-nucleotide adenylyltransferase from Lactiplantibacillus plantarum (strain ATCC BAA-793 / NCIMB 8826 / WCFS1) (Lactobacillus plantarum).